The following is a 69-amino-acid chain: uncharacterized protein (69 aa).

A run of 2 helical transmembrane segments spans residues 15-35 (LIIGLLCVIGIVMLNGLICYV) and 36-56 (LYIIAVPSLLYGIGAFIIPKT).

Its subcellular location is the cell membrane. This is an uncharacterized protein from Methanocaldococcus jannaschii (strain ATCC 43067 / DSM 2661 / JAL-1 / JCM 10045 / NBRC 100440) (Methanococcus jannaschii).